Consider the following 281-residue polypeptide: Pantothenate synthetase (281 aa).

30–37 (MGYLHDGH) is an ATP binding site. Catalysis depends on His-37, which acts as the Proton donor. A (R)-pantoate-binding site is contributed by Gln-61. Gln-61 is a beta-alanine binding site. 147-150 (GEKD) lines the ATP pocket. Gln-153 is a binding site for (R)-pantoate. ATP is bound by residues Ile-176 and 184-187 (KSSR).

It belongs to the pantothenate synthetase family. In terms of assembly, homodimer.

The protein resides in the cytoplasm. It catalyses the reaction (R)-pantoate + beta-alanine + ATP = (R)-pantothenate + AMP + diphosphate + H(+). It functions in the pathway cofactor biosynthesis; (R)-pantothenate biosynthesis; (R)-pantothenate from (R)-pantoate and beta-alanine: step 1/1. Its function is as follows. Catalyzes the condensation of pantoate with beta-alanine in an ATP-dependent reaction via a pantoyl-adenylate intermediate. This Clostridium acetobutylicum (strain ATCC 824 / DSM 792 / JCM 1419 / IAM 19013 / LMG 5710 / NBRC 13948 / NRRL B-527 / VKM B-1787 / 2291 / W) protein is Pantothenate synthetase.